The following is a 96-amino-acid chain: Cytochrome c oxidase assembly factor 3 homolog, mitochondrial (96 aa).

Residues 1-50 (MSSQGEPKPEAQFAKRIDPTKEALTKEQLQFIRQVEMAQWKKKTDKLRGR) are Mitochondrial matrix-facing. A helical membrane pass occupies residues 51–73 (NVATGLAIGAVVLGIYGYTFYSV). The Mitochondrial intermembrane segment spans residues 74-96 (SQEKIMDEIDEEAKVRVPKTGAN).

This sequence belongs to the COA3 family. Core component of the MITRAC (mitochondrial translation regulation assembly intermediate of cytochrome c oxidase complex) complex.

The protein localises to the mitochondrion inner membrane. Its function is as follows. Core component of the MITRAC (mitochondrial translation regulation assembly intermediate of cytochrome c oxidase complex) complex, that regulates cytochrome c oxidase assembly. MITRAC complexes regulate both translation of mitochondrial encoded components and assembly of nuclear-encoded components imported in mitochondrion. Required for efficient translation of MT-CO1 and mitochondrial respiratory chain complex IV assembly. The polypeptide is Cytochrome c oxidase assembly factor 3 homolog, mitochondrial (coa3a) (Danio rerio (Zebrafish)).